Here is a 441-residue protein sequence, read N- to C-terminus: Deoxyguanosinetriphosphate triphosphohydrolase-like protein (441 aa).

The region spanning 59-250 (RLTHSLEVSQ…MELADDTAYA (192 aa)) is the HD domain.

This sequence belongs to the dGTPase family. Type 2 subfamily.

The protein is Deoxyguanosinetriphosphate triphosphohydrolase-like protein of Shewanella loihica (strain ATCC BAA-1088 / PV-4).